We begin with the raw amino-acid sequence, 396 residues long: 8-amino-7-oxononanoate synthase (396 aa).

A substrate-binding site is contributed by arginine 21. 112–113 (GY) lines the pyridoxal 5'-phosphate pocket. Histidine 137 is a substrate binding site. Pyridoxal 5'-phosphate-binding residues include serine 183, histidine 211, and threonine 239. Lysine 242 carries the post-translational modification N6-(pyridoxal phosphate)lysine. Substrate is bound at residue threonine 358.

It belongs to the class-II pyridoxal-phosphate-dependent aminotransferase family. BioF subfamily. Homodimer. It depends on pyridoxal 5'-phosphate as a cofactor.

The enzyme catalyses 6-carboxyhexanoyl-[ACP] + L-alanine + H(+) = (8S)-8-amino-7-oxononanoate + holo-[ACP] + CO2. It functions in the pathway cofactor biosynthesis; biotin biosynthesis. Functionally, catalyzes the decarboxylative condensation of pimeloyl-[acyl-carrier protein] and L-alanine to produce 8-amino-7-oxononanoate (AON), [acyl-carrier protein], and carbon dioxide. The chain is 8-amino-7-oxononanoate synthase from Bordetella petrii (strain ATCC BAA-461 / DSM 12804 / CCUG 43448).